We begin with the raw amino-acid sequence, 174 residues long: Gamma-crystallin D (174 aa).

2 Beta/gamma crystallin 'Greek key' domains span residues 2-40 and 41-83; these read GKIT…RVDS and GCWM…RLIP. The tract at residues 84 to 87 is connecting peptide; it reads HAGS. Beta/gamma crystallin 'Greek key' domains are found at residues 88 to 128 and 129 to 171; these read HRIR…NVLE and GCWV…RRVM.

The protein belongs to the beta/gamma-crystallin family. As to expression, detected in the superior olivary complex of the auditory hindbrain.

In terms of biological role, crystallins are the dominant structural components of the vertebrate eye lens. This chain is Gamma-crystallin D (Crygd), found in Mus musculus (Mouse).